The primary structure comprises 572 residues: Proline dehydrogenase 1, mitochondrial (572 aa).

Positions 105 to 124 (NHSNQTNNVNNKNYNNNNNN) are enriched in low complexity. Positions 105–140 (NHSNQTNNVNNKNYNNNNNNFEKDDKFGPPNNQNNN) are disordered.

The protein belongs to the proline oxidase family. The cofactor is FAD.

It is found in the mitochondrion matrix. The enzyme catalyses L-proline + a quinone = (S)-1-pyrroline-5-carboxylate + a quinol + H(+). It functions in the pathway amino-acid degradation; L-proline degradation into L-glutamate; L-glutamate from L-proline: step 1/2. Converts proline to delta-1-pyrroline-5-carboxylate. The chain is Proline dehydrogenase 1, mitochondrial (prodh) from Dictyostelium discoideum (Social amoeba).